A 165-amino-acid chain; its full sequence is uncharacterized protein (165 aa).

Residues 1 to 25 (MKRVLFSVIVFTAVGFTFCQSKAHA) form the signal peptide.

This is an uncharacterized protein from Bacillus subtilis (strain 168).